A 198-amino-acid polypeptide reads, in one-letter code: Nucleoside triphosphate pyrophosphatase (198 aa).

The active-site Proton acceptor is the aspartate 72.

Belongs to the Maf family. A divalent metal cation is required as a cofactor.

The protein resides in the cytoplasm. It carries out the reaction a ribonucleoside 5'-triphosphate + H2O = a ribonucleoside 5'-phosphate + diphosphate + H(+). The enzyme catalyses a 2'-deoxyribonucleoside 5'-triphosphate + H2O = a 2'-deoxyribonucleoside 5'-phosphate + diphosphate + H(+). Nucleoside triphosphate pyrophosphatase. May have a dual role in cell division arrest and in preventing the incorporation of modified nucleotides into cellular nucleic acids. The chain is Nucleoside triphosphate pyrophosphatase from Corynebacterium diphtheriae (strain ATCC 700971 / NCTC 13129 / Biotype gravis).